We begin with the raw amino-acid sequence, 394 residues long: 1-deoxy-D-xylulose 5-phosphate reductoisomerase (394 aa).

6 residues coordinate NADPH: Thr-12, Gly-13, Ser-14, Ile-15, Gly-38, and Asn-126. A 1-deoxy-D-xylulose 5-phosphate-binding site is contributed by Lys-127. NADPH is bound at residue Glu-128. A Mn(2+)-binding site is contributed by Asp-151. Residues Ser-152, Glu-153, Ser-177, and His-200 each contribute to the 1-deoxy-D-xylulose 5-phosphate site. A Mn(2+)-binding site is contributed by Glu-153. An NADPH-binding site is contributed by Gly-206. Positions 213, 218, 219, and 222 each coordinate 1-deoxy-D-xylulose 5-phosphate. A Mn(2+)-binding site is contributed by Glu-222.

Belongs to the DXR family. The cofactor is Mg(2+). Mn(2+) serves as cofactor.

It catalyses the reaction 2-C-methyl-D-erythritol 4-phosphate + NADP(+) = 1-deoxy-D-xylulose 5-phosphate + NADPH + H(+). The protein operates within isoprenoid biosynthesis; isopentenyl diphosphate biosynthesis via DXP pathway; isopentenyl diphosphate from 1-deoxy-D-xylulose 5-phosphate: step 1/6. Functionally, catalyzes the NADPH-dependent rearrangement and reduction of 1-deoxy-D-xylulose-5-phosphate (DXP) to 2-C-methyl-D-erythritol 4-phosphate (MEP). This chain is 1-deoxy-D-xylulose 5-phosphate reductoisomerase, found in Beutenbergia cavernae (strain ATCC BAA-8 / DSM 12333 / CCUG 43141 / JCM 11478 / NBRC 16432 / NCIMB 13614 / HKI 0122).